Reading from the N-terminus, the 227-residue chain is Exodeoxyribonuclease (227 aa).

The enzyme catalyses Exonucleolytic cleavage in the 3'- to 5'-direction to yield nucleoside 5'-phosphates.. 3'-5' exonuclease that preferentially uses ssDNA as substrate. Plays a role in group I intron homing. May play a role in the final step of host DNA degradation, by scavenging DNA into mononucleotides. This is Exodeoxyribonuclease (dexA) from Escherichia coli (Bacteriophage T4).